A 78-amino-acid chain; its full sequence is D-alanyl carrier protein (78 aa).

The 78-residue stretch at 1–78 (MEFREQVLDL…KIVEALEELK (78 aa)) folds into the Carrier domain. O-(pantetheine 4'-phosphoryl)serine is present on Ser-36.

This sequence belongs to the DltC family. Post-translationally, 4'-phosphopantetheine is transferred from CoA to a specific serine of apo-DCP.

Its subcellular location is the cytoplasm. The protein operates within cell wall biogenesis; lipoteichoic acid biosynthesis. In terms of biological role, carrier protein involved in the D-alanylation of lipoteichoic acid (LTA). The loading of thioester-linked D-alanine onto DltC is catalyzed by D-alanine--D-alanyl carrier protein ligase DltA. The DltC-carried D-alanyl group is further transferred to cell membrane phosphatidylglycerol (PG) by forming an ester bond, probably catalyzed by DltD. D-alanylation of LTA plays an important role in modulating the properties of the cell wall in Gram-positive bacteria, influencing the net charge of the cell wall. This chain is D-alanyl carrier protein, found in Staphylococcus carnosus (strain TM300).